The chain runs to 560 residues: Formate--tetrahydrofolate ligase (560 aa).

69-76 (TPAGEGKS) contributes to the ATP binding site.

The protein belongs to the formate--tetrahydrofolate ligase family.

It catalyses the reaction (6S)-5,6,7,8-tetrahydrofolate + formate + ATP = (6R)-10-formyltetrahydrofolate + ADP + phosphate. Its pathway is one-carbon metabolism; tetrahydrofolate interconversion. This is Formate--tetrahydrofolate ligase from Listeria monocytogenes serotype 4a (strain HCC23).